Reading from the N-terminus, the 143-residue chain is Large ribosomal subunit protein uL13 (143 aa).

Belongs to the universal ribosomal protein uL13 family. In terms of assembly, part of the 50S ribosomal subunit.

Functionally, this protein is one of the early assembly proteins of the 50S ribosomal subunit, although it is not seen to bind rRNA by itself. It is important during the early stages of 50S assembly. This chain is Large ribosomal subunit protein uL13, found in Chloroflexus aggregans (strain MD-66 / DSM 9485).